The primary structure comprises 768 residues: MKKHFVVGETIKRFLRIGTSLALSISTLSLLPSAPRLSSAAGTIKIMPLGDSITYGMADEGGYRKYLSYFLQQKGYTNVDLVGPEGKDSASFNYNGQSVKYDDNHAGYSGYTITNLPGGWFGQLNGILETMQGGDYIKKYSPDIILLQIGTNDVSNGHLDGSEERLHKLLDYLRENMPSNGKVFLTTIPDLGNSGWGGNSNGDIAKYNELIKKVANDYSSKNVIYADIHSVIDASKDLADGVHPNAGGYEKMGKYWLEQIEGYLKASDGPQQTQPTQPSQGDSGPELIYGDLDGDKTITSFDAVIMRKGLINDFKDNNVKKAADIDQNGKAEVADLVQLQSFIIGKIKEFTVAEKTVTEKPVFEKSYNFPAVNQLKSSKDIPDPFIFMDGSKVESTDDWWKRQSEISCMYEYYMYGKWIDGSDDETTYSISGNSMTINVKRKSTGKTASFKAVINLPKNVRHEGGAPVILGMHKGISESTATSNGYAVITYDSDGMFSAPGTAQDNNQHKGAFYDLYPYGRNWDEQTGDLMAWSWGISRILDALYNGAAKELNINPDSSIVTGVSRYGKAASVCGAFDTRIKMCAPSCSGAGGLALYRYSSVGKTYDFSSKGGSSSYTYKENEPLGSLQASGEQGWFNGRFMEFRNAEQFPMDQHMLGALCCDPDRYLFIIGSCESEDWVNAPSVWMAYLGMKHVWDYVGISDHLAINIHKSGHAVIAEDIEKMVQYFDYHVYGIQPKMNLEELQTSVFALPKNKDSFADTFASKWLY.

The signal sequence occupies residues 1–40 (MKKHFVVGETIKRFLRIGTSLALSISTLSLLPSAPRLSSA). An acetylxylan esterase region spans residues 41–264 (AGTIKIMPLG…YWLEQIEGYL (224 aa)). Ser68 serves as the catalytic Nucleophile; for acetylxylan esterase activity. Residues Asp240 and His243 each act as for acetylxylan esterase activity in the active site. Residues 267-283 (SDGPQQTQPTQPSQGDS) are compositionally biased toward low complexity. The tract at residues 267-289 (SDGPQQTQPTQPSQGDSGPELIY) is disordered. Residues 285–352 (PELIYGDLDG…IIGKIKEFTV (68 aa)) form the Dockerin domain. Residues 353-768 (AEKTVTEKPV…ADTFASKWLY (416 aa)) form a glucuronoyl esterase region. The GXSYXG catalytic site motif motif lies at 563-568 (GVSRYG). The active-site Nucleophile; for glucuronoyl esterase activity is the Ser565. Substrate-binding residues include Lys569, Glu633, and Trp679.

It in the N-terminal section; belongs to the carbohydrate esterase 3 (CE3) family. The protein in the C-terminal section; belongs to the carbohydrate esterase 15 (CE15) family.

The protein localises to the secreted. The enzyme catalyses Deacetylation of xylans and xylo-oligosaccharides.. It carries out the reaction a 4-O-methyl-alpha-D-glucuronosyl ester derivative + H2O = 4-O-methyl-alpha-D-glucuronate derivative + an alcohol + H(+). The protein operates within glycan degradation; xylan degradation. Esterase involved in the degradation of plant cell wall polysaccharides. Catalyzes the deacetylation of chemically acetylated xylan and native, steam-extracted xylan. Seems to act in synergy with the xylanase XynD which produces xylo-oligosaccharides. Also catalyzes the deesterification of methyl esters of 4-O-methyl-D-glucuronic acid (MeGlcA) side residues in synthetic glucuronoxylan methyl ester, suggesting that it may be able to cleave ester linkages between MeGlcA carboxyl and more complex alcohols, including linkages between hemicellulose and lignin alcohols in plant cell walls. This chain is Multidomain esterase, found in Ruminococcus flavefaciens.